A 671-amino-acid chain; its full sequence is DNA ligase (671 aa).

NAD(+) is bound by residues Asp32–Asp36, Ser81–Leu82, and Glu113. Lys115 acts as the N6-AMP-lysine intermediate in catalysis. Positions 136, 173, 290, and 314 each coordinate NAD(+). Positions 408, 411, 426, and 432 each coordinate Zn(2+). A BRCT domain is found at Glu593–Ser671.

It belongs to the NAD-dependent DNA ligase family. LigA subfamily. Mg(2+) is required as a cofactor. Requires Mn(2+) as cofactor.

The catalysed reaction is NAD(+) + (deoxyribonucleotide)n-3'-hydroxyl + 5'-phospho-(deoxyribonucleotide)m = (deoxyribonucleotide)n+m + AMP + beta-nicotinamide D-nucleotide.. Functionally, DNA ligase that catalyzes the formation of phosphodiester linkages between 5'-phosphoryl and 3'-hydroxyl groups in double-stranded DNA using NAD as a coenzyme and as the energy source for the reaction. It is essential for DNA replication and repair of damaged DNA. The chain is DNA ligase from Escherichia coli (strain ATCC 8739 / DSM 1576 / NBRC 3972 / NCIMB 8545 / WDCM 00012 / Crooks).